Consider the following 368-residue polypeptide: Transcription factor TGA1 (368 aa).

Residues 53–65 (LDNNVSEDTSHGT) are compositionally biased toward polar residues. The interval 53–83 (LDNNVSEDTSHGTAGTPHMFDQEASTSRHPD) is disordered. The bZIP domain occupies 82 to 145 (PDKIQRRLAQ…NGIDTNSLGF (64 aa)). Coiled coils occupy residues 83–131 (DKIQ…RQQG) and 261–281 (NLKQ…EKLQ). The interval 84-104 (KIQRRLAQNREAARKSRLRKK) is basic motif. Residues 110-124 (LETSRLKLIQLEQEL) form a leucine-zipper region. Residues 153-363 (IAAFEMEYGH…RALSSSWATR (211 aa)) enclose the DOG1 domain. C260 and C266 are disulfide-bonded.

The protein belongs to the bZIP family. Binds DNA as a dimer. The reduced form interacts with NPR1. In terms of tissue distribution, predominantly expressed in roots.

The protein localises to the nucleus. In terms of biological role, transcriptional activator that binds specifically to the DNA sequence 5'-TGACG-3'. Recognizes ocs elements like the as-1 motif of the cauliflower mosaic virus 35S promoter. Binding to the as-1-like cis elements mediate auxin- and salicylic acid-inducible transcription. May be involved in the induction of the systemic acquired resistance (SAR) via its interaction with NPR1. Could also bind to the Hex-motif (5'-TGACGTGG-3') another cis-acting element found in plant histone promoters. The chain is Transcription factor TGA1 (TGA1) from Arabidopsis thaliana (Mouse-ear cress).